Reading from the N-terminus, the 117-residue chain is Fluoride-specific ion channel FluC 2 (117 aa).

4 consecutive transmembrane segments (helical) span residues 4–24 (FLIG…GDII), 31–51 (KFPW…GIIT), 59–79 (LSMI…TFMY), and 94–114 (LIYI…GEFI). The Na(+) site is built by G69 and T72.

This sequence belongs to the fluoride channel Fluc/FEX (TC 1.A.43) family.

The protein localises to the cell membrane. It catalyses the reaction fluoride(in) = fluoride(out). With respect to regulation, na(+) is not transported, but it plays an essential structural role and its presence is essential for fluoride channel function. Fluoride-specific ion channel. Important for reducing fluoride concentration in the cell, thus reducing its toxicity. In Clostridium acetobutylicum (strain ATCC 824 / DSM 792 / JCM 1419 / IAM 19013 / LMG 5710 / NBRC 13948 / NRRL B-527 / VKM B-1787 / 2291 / W), this protein is Fluoride-specific ion channel FluC 2.